Consider the following 122-residue polypeptide: MIKKESKKEQRLRRHRRVRKKVFGTPERPRLCVFRSNKHIYAQIIDDTIGHTLVSASTLDPELREKLQKTWNVEAAKEVGLLIGKRALEKGIKKVVFDRGGYKYHGRVKALADGAREAGLEF.

Belongs to the universal ribosomal protein uL18 family. In terms of assembly, part of the 50S ribosomal subunit; part of the 5S rRNA/L5/L18/L25 subcomplex. Contacts the 5S and 23S rRNAs.

Functionally, this is one of the proteins that bind and probably mediate the attachment of the 5S RNA into the large ribosomal subunit, where it forms part of the central protuberance. This Thermotoga petrophila (strain ATCC BAA-488 / DSM 13995 / JCM 10881 / RKU-1) protein is Large ribosomal subunit protein uL18.